Consider the following 735-residue polypeptide: Phosphoribosylformylglycinamidine synthase subunit PurL (735 aa).

Residue His49 is part of the active site. Positions 52 and 91 each coordinate ATP. A Mg(2+)-binding site is contributed by Glu93. Residues 94–97 (SHNH) and Arg116 each bind substrate. The Proton acceptor role is filled by His95. Position 117 (Asp117) interacts with Mg(2+). Gln240 contributes to the substrate binding site. Position 268 (Asp268) interacts with Mg(2+). A substrate-binding site is contributed by 312 to 314 (ESQ). ATP contacts are provided by Asp493 and Gly530. Mg(2+) is bound at residue Asn531. Ser533 is a substrate binding site.

Belongs to the FGAMS family. In terms of assembly, monomer. Part of the FGAM synthase complex composed of 1 PurL, 1 PurQ and 2 PurS subunits.

It localises to the cytoplasm. It carries out the reaction N(2)-formyl-N(1)-(5-phospho-beta-D-ribosyl)glycinamide + L-glutamine + ATP + H2O = 2-formamido-N(1)-(5-O-phospho-beta-D-ribosyl)acetamidine + L-glutamate + ADP + phosphate + H(+). It participates in purine metabolism; IMP biosynthesis via de novo pathway; 5-amino-1-(5-phospho-D-ribosyl)imidazole from N(2)-formyl-N(1)-(5-phospho-D-ribosyl)glycinamide: step 1/2. Functionally, part of the phosphoribosylformylglycinamidine synthase complex involved in the purines biosynthetic pathway. Catalyzes the ATP-dependent conversion of formylglycinamide ribonucleotide (FGAR) and glutamine to yield formylglycinamidine ribonucleotide (FGAM) and glutamate. The FGAM synthase complex is composed of three subunits. PurQ produces an ammonia molecule by converting glutamine to glutamate. PurL transfers the ammonia molecule to FGAR to form FGAM in an ATP-dependent manner. PurS interacts with PurQ and PurL and is thought to assist in the transfer of the ammonia molecule from PurQ to PurL. The chain is Phosphoribosylformylglycinamidine synthase subunit PurL from Methylocella silvestris (strain DSM 15510 / CIP 108128 / LMG 27833 / NCIMB 13906 / BL2).